We begin with the raw amino-acid sequence, 306 residues long: Recombination-associated protein RdgC (306 aa).

It belongs to the RdgC family.

The protein localises to the cytoplasm. Its subcellular location is the nucleoid. Its function is as follows. May be involved in recombination. This Pseudomonas syringae pv. syringae (strain B728a) protein is Recombination-associated protein RdgC.